A 295-amino-acid chain; its full sequence is Hepatic leukemia factor (295 aa).

Positions 34 to 52 are enriched in basic and acidic residues; the sequence is LHPEDAFSKDRDKGKKLDD. Disordered stretches follow at residues 34 to 69 and 93 to 160; these read LHPEDAFSKDRDKGKKLDDGSNSPTVPQSAFLGPTL and SENG…NRNT. One can recognise a bZIP domain in the interval 225-288; sequence DDKYWARRRK…GKCKNILAKY (64 aa). The tract at residues 227–247 is basic motif; the sequence is KYWARRRKNNMAAKRSRDARR. The interval 248–255 is leucine-zipper; the sequence is LKENQIAI.

It belongs to the bZIP family. PAR subfamily. Binds DNA specifically as homodimer or heterodimer with other PAR factors. In terms of tissue distribution, isoform HLF43 is abundant in brain, liver and kidney. Isoform HLF36 is expressed only in the liver. Both isoforms accumulate in the liver with different circadian amplitudes. Isoform HLF36 reaches peak expression levels between 8 and 12 p.m. Isoform HLF43 displays a more pronounced fluctuation through the day.

It is found in the nucleus. This is Hepatic leukemia factor (Hlf) from Rattus norvegicus (Rat).